The sequence spans 138 residues: Small ribosomal subunit protein uS11c (138 aa).

The disordered stretch occupies residues 1–22 (MAKPIPRIGSQRNRRINSRKNA). A compositionally biased stretch (basic residues) spans 12-22 (RNRRINSRKNA).

Belongs to the universal ribosomal protein uS11 family. Part of the 30S ribosomal subunit.

The protein resides in the plastid. It localises to the chloroplast. The sequence is that of Small ribosomal subunit protein uS11c from Fagopyrum esculentum subsp. ancestrale (Wild buckwheat).